The following is a 768-amino-acid chain: cGMP-dependent protein kinase, isozyme 1 (768 aa).

Residues 1–192 (MAAGMLTDRE…NDFLKNIDAS (192 aa)) form a regulatory region. Positions 114–127 (PLASTSSASPSGRT) are enriched in low complexity. Residues 114-134 (PLASTSSASPSGRTSADEVRP) form a disordered region. 3',5'-cyclic GMP contacts are provided by residues 249–252 (GELA), 259–260 (RT), Arg-366, 375–378 (GEQA), 385–386 (RT), and Tyr-421. One can recognise a Protein kinase domain in the interval 457 to 717 (LEVVSTLGIG…IQDIKKHKWF (261 aa)). Residues 463–471 (LGIGGFGRV) and Lys-488 contribute to the ATP site. Asp-582 serves as the catalytic Proton acceptor. In terms of domain architecture, AGC-kinase C-terminal spans 718-768 (LGFDWDGLASQLLIPPFVRPIAHPTDVRYFDRFPCDLNEPPDELSGWDADF).

The protein belongs to the protein kinase superfamily. AGC Ser/Thr protein kinase family. cGMP subfamily. In terms of assembly, homodimer. Mg(2+) serves as cofactor. Post-translationally, autophosphorylated. In terms of tissue distribution, in embryo stage 13, expression is seen in a few large, irregular cells having the appearance of hemocytes or macrophages. In adults, expression is seen in optic lamina and weakly in testis.

The catalysed reaction is L-seryl-[protein] + ATP = O-phospho-L-seryl-[protein] + ADP + H(+). It catalyses the reaction L-threonyl-[protein] + ATP = O-phospho-L-threonyl-[protein] + ADP + H(+). Binding of cGMP results in enzyme activation. This chain is cGMP-dependent protein kinase, isozyme 1 (Pkg21D), found in Drosophila melanogaster (Fruit fly).